The primary structure comprises 252 residues: Triosephosphate isomerase (252 aa).

Asparagine 10–lysine 12 contacts substrate. Histidine 96 functions as the Electrophile in the catalytic mechanism. Glutamate 168 serves as the catalytic Proton acceptor. Substrate contacts are provided by residues glycine 174, serine 214, and glycine 235 to glycine 236.

Belongs to the triosephosphate isomerase family. Homodimer.

Its subcellular location is the cytoplasm. The enzyme catalyses D-glyceraldehyde 3-phosphate = dihydroxyacetone phosphate. It participates in carbohydrate biosynthesis; gluconeogenesis. It functions in the pathway carbohydrate degradation; glycolysis; D-glyceraldehyde 3-phosphate from glycerone phosphate: step 1/1. In terms of biological role, involved in the gluconeogenesis. Catalyzes stereospecifically the conversion of dihydroxyacetone phosphate (DHAP) to D-glyceraldehyde-3-phosphate (G3P). The chain is Triosephosphate isomerase from Lactobacillus delbrueckii subsp. bulgaricus (strain ATCC 11842 / DSM 20081 / BCRC 10696 / JCM 1002 / NBRC 13953 / NCIMB 11778 / NCTC 12712 / WDCM 00102 / Lb 14).